Here is a 436-residue protein sequence, read N- to C-terminus: MRQALPLVTRQGDRIAIVSGLRTPFARQATAFHGIPAVDLGKMVVGELLARSEIPADAIEQLVFGQVVQMPKAPNIAREIVLGTGMNVHTDAYSVSRACATSFQAVANVAESLMAGTIRAGIAGGADSSSVLPIGVSKALARVLVDVNKARTTRQRLTLFSRLRLRDLLPVPPAVAEYSTGLRMGDTAEQMAKTYGITREQQDALAHRSHQRAAQAWAEGKLAEEVMTTYVPPYKNPFAEDNNIRGASTLADYAKLRPAFDRKHGSVTAANSTPLTDGAAAVILMTESRAKELGLHPLGYLRSYAFTAIDVWQDMLLGPAWSTPLALERAGLTMADLTLFDMHEAFAAQTLANLQLLGSERFAREVLGRAQATGEVDDAKFNVLGGSIAYGHPFAATGARMITQTLHELRRRGGGFGLVTACAAGGLGAAMVLEAE.

Cys99 acts as the Acyl-thioester intermediate in catalysis. Active-site proton acceptor residues include His392 and Cys422.

This sequence belongs to the thiolase-like superfamily. Thiolase family. As to quaternary structure, heterotetramer of two alpha chains (FadJ) and two beta chains (FadI).

It is found in the cytoplasm. It catalyses the reaction an acyl-CoA + acetyl-CoA = a 3-oxoacyl-CoA + CoA. The protein operates within lipid metabolism; fatty acid beta-oxidation. Its function is as follows. Catalyzes the final step of fatty acid oxidation in which acetyl-CoA is released and the CoA ester of a fatty acid two carbons shorter is formed. This Salmonella paratyphi A (strain AKU_12601) protein is 3-ketoacyl-CoA thiolase.